The following is an 85-amino-acid chain: Large ribosomal subunit protein bL27 (85 aa).

The segment at 1–20 (MAHKKAGGSTRNGRDSEAKR) is disordered.

This sequence belongs to the bacterial ribosomal protein bL27 family.

This is Large ribosomal subunit protein bL27 from Klebsiella pneumoniae (strain 342).